A 463-amino-acid polypeptide reads, in one-letter code: Hexose-6-phosphate:phosphate antiporter (463 aa).

Topologically, residues 1–24 (MLAFLNQVRKPTLDLPLEVRRKMW) are cytoplasmic. The chain crosses the membrane as a helical span at residues 25 to 45 (FKPFMQSYLVVFIGYLTMYLI). Residues 46 to 60 (RKNFNIAQNDMISTY) lie on the Periplasmic side of the membrane. The helical transmembrane segment at 61–81 (GLSMTQLGMIGLGFSITYGVG) threads the bilayer. Residues 82–96 (KTLVSYYADGKNTKQ) are Cytoplasmic-facing. A helical membrane pass occupies residues 97-117 (FLPFMLILSAICMLGFSASMG). Residues 118–120 (SGS) lie on the Periplasmic side of the membrane. Residues 121-141 (VSLFLMIAFYALSGFFQSTGG) form a helical membrane-spanning segment. Topologically, residues 142–159 (SCSYSTITKWTPRRKRGT) are cytoplasmic. The helical transmembrane segment at 160 to 180 (FLGFWNISHNLGGAGAAGVAL) threads the bilayer. At 181-189 (FGANYLFDG) the chain is on the periplasmic side. A helical transmembrane segment spans residues 190–210 (HVIGMFIFPSIIALIVGFIGL). At 211–259 (RYGSDSPESYGLGKAEELFGEEISEEDKETESTDMTKWQIFVEYVLKNK) the chain is on the cytoplasmic side. A helical membrane pass occupies residues 260–280 (VIWLLCFANIFLYVVRIGIDQ). Residues 281–297 (WSTVYAFQELKLSKAVA) lie on the Periplasmic side of the membrane. The chain crosses the membrane as a helical span at residues 298–318 (IQGFTLFEAGALVGTLLWGWL). At 319–326 (SDLANGRR) the chain is on the cytoplasmic side. A helical transmembrane segment spans residues 327–347 (GLVACIALALIIATLGVYQHA). The Periplasmic segment spans residues 348 to 357 (SNEYIYLASL). Residues 358 to 378 (FALGFLVFGPQLLIGVAAVGF) form a helical membrane-spanning segment. Topologically, residues 379–382 (VPKK) are cytoplasmic. A helical transmembrane segment spans residues 383-403 (AIGAADGIKGTFAYLIGDSFA). Residues 404 to 425 (KLGLGMIADGTPVFGLTGWAGT) are Periplasmic-facing. A helical membrane pass occupies residues 426-446 (FAALDIAAIGCICLMAIVAVM). The Cytoplasmic portion of the chain corresponds to 447–463 (EERKIRREKKIQQLTVA).

The protein belongs to the major facilitator superfamily. Organophosphate:Pi antiporter (OPA) (TC 2.A.1.4) family.

The protein resides in the cell inner membrane. Functionally, mediates the exchange of external hexose 6-phosphate and internal inorganic phosphate. This Escherichia coli O157:H7 protein is Hexose-6-phosphate:phosphate antiporter (uhpT).